A 198-amino-acid chain; its full sequence is uncharacterized protein (198 aa).

Positions 1–28 (MHPTQRKLMKRIILFLSLLFCIACPAIA) are cleaved as a signal peptide.

Belongs to the fimbrial protein family.

The protein localises to the fimbrium. Its function is as follows. Part of the yadCKLM-htrE-yadVN fimbrial operon. Could contribute to adhesion to various surfaces in specific environmental niches. This is an uncharacterized protein from Escherichia coli (strain K12).